The sequence spans 149 residues: D-aminoacyl-tRNA deacylase (149 aa).

Positions 137–138 match the Gly-cisPro motif, important for rejection of L-amino acids motif; it reads GP.

The protein belongs to the DTD family. Homodimer.

Its subcellular location is the cytoplasm. The enzyme catalyses glycyl-tRNA(Ala) + H2O = tRNA(Ala) + glycine + H(+). The catalysed reaction is a D-aminoacyl-tRNA + H2O = a tRNA + a D-alpha-amino acid + H(+). Functionally, an aminoacyl-tRNA editing enzyme that deacylates mischarged D-aminoacyl-tRNAs. Also deacylates mischarged glycyl-tRNA(Ala), protecting cells against glycine mischarging by AlaRS. Acts via tRNA-based rather than protein-based catalysis; rejects L-amino acids rather than detecting D-amino acids in the active site. By recycling D-aminoacyl-tRNA to D-amino acids and free tRNA molecules, this enzyme counteracts the toxicity associated with the formation of D-aminoacyl-tRNA entities in vivo and helps enforce protein L-homochirality. This chain is D-aminoacyl-tRNA deacylase, found in Clostridium kluyveri (strain ATCC 8527 / DSM 555 / NBRC 12016 / NCIMB 10680 / K1).